A 96-amino-acid chain; its full sequence is Pore-forming peptide amoebapore B (96 aa).

The first 19 residues, 1–19 (MRAIIFVLIFAIAFAATRE), serve as a signal peptide directing secretion. One can recognise a Saposin B-type domain in the interval 20 to 96 (GAILCNLCKD…VVVCEKIHAC (77 aa)). Intrachain disulfides connect C24/C96, C27/C90, and C54/C65.

As to quaternary structure, monomer. Homodimer. Hexamer; formed during insertion in the membrane.

The protein localises to the cytoplasmic granule. In terms of biological role, forms pores in the cell membrane of host cells. Has antibacterial activity against M.luteus, no activity against E.coli. Implicated in the cytolytic activity of the parasite. The polypeptide is Pore-forming peptide amoebapore B (Entamoeba histolytica (strain ATCC 30459 / HM-1:IMSS / ABRM)).